We begin with the raw amino-acid sequence, 359 residues long: Phosphate acyltransferase (359 aa).

This sequence belongs to the PlsX family. Homodimer. Probably interacts with PlsY.

Its subcellular location is the cytoplasm. The enzyme catalyses a fatty acyl-[ACP] + phosphate = an acyl phosphate + holo-[ACP]. It functions in the pathway lipid metabolism; phospholipid metabolism. In terms of biological role, catalyzes the reversible formation of acyl-phosphate (acyl-PO(4)) from acyl-[acyl-carrier-protein] (acyl-ACP). This enzyme utilizes acyl-ACP as fatty acyl donor, but not acyl-CoA. This Salmonella agona (strain SL483) protein is Phosphate acyltransferase.